The sequence spans 540 residues: GMP synthase [glutamine-hydrolyzing] (540 aa).

One can recognise a Glutamine amidotransferase type-1 domain in the interval 29–222; it reads KILIVDFGSQ…VRKVAGLTGD (194 aa). Cysteine 106 acts as the Nucleophile in catalysis. Catalysis depends on residues histidine 196 and glutamate 198. One can recognise a GMPS ATP-PPase domain in the interval 223-415; sequence WTMRAFREEA…LGLPDVFVGR (193 aa). 250–256 contacts ATP; that stretch reads SGGVDSA.

In terms of assembly, homodimer.

The enzyme catalyses XMP + L-glutamine + ATP + H2O = GMP + L-glutamate + AMP + diphosphate + 2 H(+). It participates in purine metabolism; GMP biosynthesis; GMP from XMP (L-Gln route): step 1/1. In terms of biological role, catalyzes the synthesis of GMP from XMP. The sequence is that of GMP synthase [glutamine-hydrolyzing] from Rhodopseudomonas palustris (strain ATCC BAA-98 / CGA009).